The following is an 806-amino-acid chain: Phenylalanine--tRNA ligase beta subunit (806 aa).

One can recognise a tRNA-binding domain in the interval 40 to 155 (NKGVKGVVVG…SDAEVGADAL (116 aa)). The 76-residue stretch at 409–484 (VQERTVSVTA…RLYGYDHIPV (76 aa)) folds into the B5 domain. Residues Asp462, Asp468, Glu471, and Glu472 each coordinate Mg(2+). The FDX-ACB domain occupies 712–805 (PRFPSMTRDM…VEEKFGAELR (94 aa)).

The protein belongs to the phenylalanyl-tRNA synthetase beta subunit family. Type 1 subfamily. In terms of assembly, tetramer of two alpha and two beta subunits. Requires Mg(2+) as cofactor.

It localises to the cytoplasm. It carries out the reaction tRNA(Phe) + L-phenylalanine + ATP = L-phenylalanyl-tRNA(Phe) + AMP + diphosphate + H(+). In Bacillus cereus (strain ZK / E33L), this protein is Phenylalanine--tRNA ligase beta subunit.